Reading from the N-terminus, the 332-residue chain is Holliday junction branch migration complex subunit RuvB (332 aa).

Positions 1–181 are large ATPase domain (RuvB-L); the sequence is MARILDNNVM…FGITGHMEYY (181 aa). ATP-binding positions include Leu-20, Arg-21, Gly-62, Lys-65, Thr-66, Thr-67, 128–130, Arg-171, Tyr-181, and Arg-218; that span reads EDF. Mg(2+) is bound at residue Thr-66. The tract at residues 182 to 252 is small ATPAse domain (RuvB-S); it reads QEKDLTEIVE…ITDRALTMLD (71 aa). The head domain (RuvB-H) stretch occupies residues 255-332; it reads REGLNYIDQK…RHLGYPYQNT (78 aa). Residues Arg-291, Arg-310, Arg-312, and Arg-315 each contribute to the DNA site.

This sequence belongs to the RuvB family. In terms of assembly, homohexamer. Forms an RuvA(8)-RuvB(12)-Holliday junction (HJ) complex. HJ DNA is sandwiched between 2 RuvA tetramers; dsDNA enters through RuvA and exits via RuvB. An RuvB hexamer assembles on each DNA strand where it exits the tetramer. Each RuvB hexamer is contacted by two RuvA subunits (via domain III) on 2 adjacent RuvB subunits; this complex drives branch migration. In the full resolvosome a probable DNA-RuvA(4)-RuvB(12)-RuvC(2) complex forms which resolves the HJ.

It localises to the cytoplasm. The enzyme catalyses ATP + H2O = ADP + phosphate + H(+). Functionally, the RuvA-RuvB-RuvC complex processes Holliday junction (HJ) DNA during genetic recombination and DNA repair, while the RuvA-RuvB complex plays an important role in the rescue of blocked DNA replication forks via replication fork reversal (RFR). RuvA specifically binds to HJ cruciform DNA, conferring on it an open structure. The RuvB hexamer acts as an ATP-dependent pump, pulling dsDNA into and through the RuvAB complex. RuvB forms 2 homohexamers on either side of HJ DNA bound by 1 or 2 RuvA tetramers; 4 subunits per hexamer contact DNA at a time. Coordinated motions by a converter formed by DNA-disengaged RuvB subunits stimulates ATP hydrolysis and nucleotide exchange. Immobilization of the converter enables RuvB to convert the ATP-contained energy into a lever motion, pulling 2 nucleotides of DNA out of the RuvA tetramer per ATP hydrolyzed, thus driving DNA branch migration. The RuvB motors rotate together with the DNA substrate, which together with the progressing nucleotide cycle form the mechanistic basis for DNA recombination by continuous HJ branch migration. Branch migration allows RuvC to scan DNA until it finds its consensus sequence, where it cleaves and resolves cruciform DNA. The polypeptide is Holliday junction branch migration complex subunit RuvB (Streptococcus pyogenes serotype M18 (strain MGAS8232)).